The sequence spans 150 residues: Large ribosomal subunit protein bL9 (150 aa).

Belongs to the bacterial ribosomal protein bL9 family.

Functionally, binds to the 23S rRNA. The protein is Large ribosomal subunit protein bL9 of Shewanella baltica (strain OS223).